The chain runs to 427 residues: UDP-N-acetylglucosamine--N-acetylmuramyl-(pentapeptide) pyrophosphoryl-undecaprenol N-acetylglucosamine transferase (427 aa).

UDP-N-acetyl-alpha-D-glucosamine-binding positions include 29–31 (TGG), asparagine 141, arginine 177, serine 205, isoleucine 258, and glutamine 303. The tract at residues 408–427 (SLHPIPDSRFPIRTSAGGAQ) is disordered.

Belongs to the glycosyltransferase 28 family. MurG subfamily.

It is found in the cell inner membrane. It catalyses the reaction di-trans,octa-cis-undecaprenyl diphospho-N-acetyl-alpha-D-muramoyl-L-alanyl-D-glutamyl-meso-2,6-diaminopimeloyl-D-alanyl-D-alanine + UDP-N-acetyl-alpha-D-glucosamine = di-trans,octa-cis-undecaprenyl diphospho-[N-acetyl-alpha-D-glucosaminyl-(1-&gt;4)]-N-acetyl-alpha-D-muramoyl-L-alanyl-D-glutamyl-meso-2,6-diaminopimeloyl-D-alanyl-D-alanine + UDP + H(+). It participates in cell wall biogenesis; peptidoglycan biosynthesis. In terms of biological role, cell wall formation. Catalyzes the transfer of a GlcNAc subunit on undecaprenyl-pyrophosphoryl-MurNAc-pentapeptide (lipid intermediate I) to form undecaprenyl-pyrophosphoryl-MurNAc-(pentapeptide)GlcNAc (lipid intermediate II). This chain is UDP-N-acetylglucosamine--N-acetylmuramyl-(pentapeptide) pyrophosphoryl-undecaprenol N-acetylglucosamine transferase, found in Xanthomonas campestris pv. campestris (strain 8004).